The sequence spans 421 residues: Testin (421 aa).

The PET domain maps to 92-199 (MILTNPVAAK…GDVKLPCEMD (108 aa)). LIM zinc-binding domains lie at 234–297 (YSCY…CDSE), 299–359 (PRCA…NHAV), and 362–421 (QGCH…KRMS).

This sequence belongs to the prickle / espinas / testin family. In terms of assembly, interacts via LIM domain 1 with ZYX. Interacts (via LIM domain 3) with ENAH and VASP. Interacts with ALKBH4, talin, actin, alpha-actinin, GRIP1 and PXN. Interacts (via LIM domain 2) with ACTL7A (via N-terminus). Heterodimer with ACTL7A; the heterodimer interacts with ENAH to form a heterotrimer.

It is found in the cytoplasm. Its subcellular location is the cell junction. It localises to the focal adhesion. Its function is as follows. Scaffold protein that may play a role in cell adhesion, cell spreading and in the reorganization of the actin cytoskeleton. Plays a role in the regulation of cell proliferation. May act as a tumor suppressor. In Nomascus leucogenys (Northern white-cheeked gibbon), this protein is Testin (TES).